Here is a 320-residue protein sequence, read N- to C-terminus: 4-hydroxyproline 2-epimerase (320 aa).

C98 serves as the catalytic Proton acceptor. Substrate-binding positions include 99 to 100 (GH), H218, and D242. C246 functions as the Proton donor in the catalytic mechanism. 247 to 248 (GT) contributes to the substrate binding site.

Belongs to the proline racemase family.

The catalysed reaction is trans-4-hydroxy-L-proline = cis-4-hydroxy-D-proline. Its function is as follows. Catalyzes the epimerization of trans-4-hydroxy-L-proline (t4LHyp) to cis-4-hydroxy-D-proline (c4DHyp). Is likely involved in a degradation pathway that converts t4LHyp to alpha-ketoglutarate. Displays no proline racemase activity. This Burkholderia pseudomallei (strain 1710b) protein is 4-hydroxyproline 2-epimerase.